The sequence spans 162 residues: Protein SLM4 (162 aa).

A helical membrane pass occupies residues 127 to 144 (LLLLFIAEGSFPYGLLVI).

As to quaternary structure, component of the GSE complex composed of GTR1, GTR2, SLM4, MEH1 and LTV1. Component of the EGO complex, at least composed of GTR2, SLM4 and MEH1.

It localises to the vacuole membrane. Component of the GSE complex, a GTPase complex required for intracellular sorting of GAP1 out of the endosome. Component of the EGO complex, a complex involved in the regulation of microautophagy. This is Protein SLM4 (SLM4) from Saccharomyces cerevisiae (strain ATCC 204508 / S288c) (Baker's yeast).